The chain runs to 308 residues: Probable manganese-dependent inorganic pyrophosphatase (308 aa).

Mn(2+) is bound by residues His-9, Asp-13, Asp-15, Asp-75, His-97, and Asp-149.

The protein belongs to the PPase class C family. Mn(2+) is required as a cofactor.

It localises to the cytoplasm. The catalysed reaction is diphosphate + H2O = 2 phosphate + H(+). The chain is Probable manganese-dependent inorganic pyrophosphatase from Listeria monocytogenes serotype 4b (strain CLIP80459).